Here is a 285-residue protein sequence, read N- to C-terminus: Sulfotransferase 2A2 (285 aa).

3'-phosphoadenylyl sulfate-binding residues include K44, S45, G46, T47, N48, and W49. H99 functions as the Proton acceptor in the catalytic mechanism. R121, S129, Y184, S218, R247, K248, and G249 together coordinate 3'-phosphoadenylyl sulfate.

This sequence belongs to the sulfotransferase 1 family. Detected in liver.

The protein resides in the cytoplasm. It carries out the reaction an alcohol + 3'-phosphoadenylyl sulfate = an alkyl sulfate + adenosine 3',5'-bisphosphate + H(+). Functionally, sulfotransferase that utilizes 3'-phospho-5'-adenylyl sulfate (PAPS) as sulfonate donor to catalyze the sulfate conjugation of a potential wide variety of acceptor molecules bearing a hydroxyl group. Sulfonation increases the water solubility of most compounds, and therefore their renal excretion, but it can also result in bioactivation to form active metabolites. This chain is Sulfotransferase 2A2, found in Rattus norvegicus (Rat).